The chain runs to 472 residues: 3-isopropylmalate dehydratase large subunit (472 aa).

Residues cysteine 351, cysteine 412, and cysteine 415 each contribute to the [4Fe-4S] cluster site.

The protein belongs to the aconitase/IPM isomerase family. LeuC type 1 subfamily. As to quaternary structure, heterodimer of LeuC and LeuD. Requires [4Fe-4S] cluster as cofactor.

The enzyme catalyses (2R,3S)-3-isopropylmalate = (2S)-2-isopropylmalate. It participates in amino-acid biosynthesis; L-leucine biosynthesis; L-leucine from 3-methyl-2-oxobutanoate: step 2/4. Catalyzes the isomerization between 2-isopropylmalate and 3-isopropylmalate, via the formation of 2-isopropylmaleate. This Marinobacter nauticus (strain ATCC 700491 / DSM 11845 / VT8) (Marinobacter aquaeolei) protein is 3-isopropylmalate dehydratase large subunit.